Here is a 298-residue protein sequence, read N- to C-terminus: Glutamyl-Q tRNA(Asp) synthetase (298 aa).

L-glutamate contacts are provided by residues 9 to 13 (RFAPS) and Glu-45. A 'HIGH' region motif is present at residues 12-22 (PSPSGELHFGS). 4 residues coordinate Zn(2+): Cys-101, Cys-103, Tyr-115, and Cys-119. L-glutamate-binding residues include Tyr-172 and Arg-190. Residues 228 to 232 (KLSKQ) carry the 'KMSKS' region motif. Residue Lys-231 participates in ATP binding.

The protein belongs to the class-I aminoacyl-tRNA synthetase family. GluQ subfamily. It depends on Zn(2+) as a cofactor.

Catalyzes the tRNA-independent activation of glutamate in presence of ATP and the subsequent transfer of glutamate onto a tRNA(Asp). Glutamate is transferred on the 2-amino-5-(4,5-dihydroxy-2-cyclopenten-1-yl) moiety of the queuosine in the wobble position of the QUC anticodon. The chain is Glutamyl-Q tRNA(Asp) synthetase from Salmonella typhimurium (strain LT2 / SGSC1412 / ATCC 700720).